Reading from the N-terminus, the 870-residue chain is DNA mismatch repair protein MutS (870 aa).

620–627 (GPNMAGKS) lines the ATP pocket.

This sequence belongs to the DNA mismatch repair MutS family.

Its function is as follows. This protein is involved in the repair of mismatches in DNA. It is possible that it carries out the mismatch recognition step. This protein has a weak ATPase activity. In Acetivibrio thermocellus (strain ATCC 27405 / DSM 1237 / JCM 9322 / NBRC 103400 / NCIMB 10682 / NRRL B-4536 / VPI 7372) (Clostridium thermocellum), this protein is DNA mismatch repair protein MutS.